Here is a 185-residue protein sequence, read N- to C-terminus: TATA-box-binding protein 3 (185 aa).

Repeat copies occupy residues 7–84 and 100–178.

It belongs to the TBP family.

In terms of biological role, general factor that plays a role in the activation of archaeal genes transcribed by RNA polymerase. Binds specifically to the TATA box promoter element which lies close to the position of transcription initiation. This chain is TATA-box-binding protein 3, found in Methanosarcina mazei (strain ATCC BAA-159 / DSM 3647 / Goe1 / Go1 / JCM 11833 / OCM 88) (Methanosarcina frisia).